Reading from the N-terminus, the 258-residue chain is CDP-diacylglycerol pyrophosphatase (258 aa).

The helical transmembrane segment at 10 to 30 (YLLTLLILIILAAGLIYKLRF) threads the bilayer.

Belongs to the Cdh family.

It is found in the cell inner membrane. It catalyses the reaction a CDP-1,2-diacyl-sn-glycerol + H2O = a 1,2-diacyl-sn-glycero-3-phosphate + CMP + 2 H(+). It functions in the pathway phospholipid metabolism; CDP-diacylglycerol degradation; phosphatidate from CDP-diacylglycerol: step 1/1. The polypeptide is CDP-diacylglycerol pyrophosphatase (cdh) (Yersinia pestis).